The chain runs to 212 residues: Large ribosomal subunit protein bL25 (212 aa).

The span at 1 to 16 (MKTRIDLTVEPRETGK) shows a compositional bias: basic and acidic residues. The disordered stretch occupies residues 1–22 (MKTRIDLTVEPRETGKHNSRGL).

This sequence belongs to the bacterial ribosomal protein bL25 family. CTC subfamily. As to quaternary structure, part of the 50S ribosomal subunit; part of the 5S rRNA/L5/L18/L25 subcomplex. Contacts the 5S rRNA. Binds to the 5S rRNA independently of L5 and L18.

Functionally, this is one of the proteins that binds to the 5S RNA in the ribosome where it forms part of the central protuberance. In Bdellovibrio bacteriovorus (strain ATCC 15356 / DSM 50701 / NCIMB 9529 / HD100), this protein is Large ribosomal subunit protein bL25.